The following is a 72-amino-acid chain: Translation initiation factor IF-1 (72 aa).

An S1-like domain is found at 1–72; that stretch reads MAKDDVIEIE…TKGRITYRFK (72 aa).

Belongs to the IF-1 family. In terms of assembly, component of the 30S ribosomal translation pre-initiation complex which assembles on the 30S ribosome in the order IF-2 and IF-3, IF-1 and N-formylmethionyl-tRNA(fMet); mRNA recruitment can occur at any time during PIC assembly.

The protein resides in the cytoplasm. In terms of biological role, one of the essential components for the initiation of protein synthesis. Stabilizes the binding of IF-2 and IF-3 on the 30S subunit to which N-formylmethionyl-tRNA(fMet) subsequently binds. Helps modulate mRNA selection, yielding the 30S pre-initiation complex (PIC). Upon addition of the 50S ribosomal subunit IF-1, IF-2 and IF-3 are released leaving the mature 70S translation initiation complex. The sequence is that of Translation initiation factor IF-1 from Ligilactobacillus salivarius (strain UCC118) (Lactobacillus salivarius).